The primary structure comprises 325 residues: dITP/XTP pyrophosphatase (325 aa).

The tract at residues 1–128 (MKEKIYEYKD…KKVSELGDTI (128 aa)) is unknown. Residues 129-324 (LIATRNEGKT…MEVFPAWQNA (196 aa)) are NTP pyrophosphatase. 132–137 (TRNEGK) contacts substrate. Residues E165 and D194 each coordinate Mg(2+). Catalysis depends on D194, which acts as the Proton acceptor. Substrate contacts are provided by residues S195, 278–281 (FGYD), K301, and 306–307 (HR).

The protein belongs to the HAM1 NTPase family. Homodimer. The cofactor is Mg(2+).

It catalyses the reaction XTP + H2O = XMP + diphosphate + H(+). The enzyme catalyses dITP + H2O = dIMP + diphosphate + H(+). The catalysed reaction is ITP + H2O = IMP + diphosphate + H(+). In terms of biological role, pyrophosphatase that catalyzes the hydrolysis of nucleoside triphosphates to their monophosphate derivatives, with a high preference for the non-canonical purine nucleotides XTP (xanthosine triphosphate), dITP (deoxyinosine triphosphate) and ITP. Seems to function as a house-cleaning enzyme that removes non-canonical purine nucleotides from the nucleotide pool, thus preventing their incorporation into DNA/RNA and avoiding chromosomal lesions. This chain is dITP/XTP pyrophosphatase, found in Streptococcus mutans serotype c (strain ATCC 700610 / UA159).